A 140-amino-acid chain; its full sequence is Gas vesicle protein O (140 aa).

The span at 1-14 (MSDQGNEHANHDGI) shows a compositional bias: basic and acidic residues. A disordered region spans residues 1–61 (MSDQGNEHAN…DSTIGLSDAQ (61 aa)). Residues 39-56 (QTASDEAVSNQSPDSTIG) show a composition bias toward polar residues.

Belongs to the gas vesicle GvpO family. In terms of assembly, forms homodimers, forms a GvpN-GvpO heterodimer, interacts with GvpC, GvpF, GvpI and GvpL, might interact with GvpA.

It is found in the gas vesicle. The protein resides in the cytoplasm. Functionally, a minor component of the gas vesicle (GV), may play a role in transcription and/or RNA stability and/or in GV assembly. Gas vesicles are small, hollow, gas filled protein structures found in some microorganisms. They allow positioning of halobacteria at the optimal depth for growth in the poorly aerated shallow brine pools of their habitat. Its function is as follows. Expression of a 9.5 kb mc-vac DNA fragment containing 2 divergently transcribed regions (gvpD-gvpE-gvpF-gvpG-gvpH-gvpI-gvpJ-gvpK-gvpL-gvpM and gvpA-gvpC-gvpN-gvpO) allows H.volcanii to produce gas vesicles. The polypeptide is Gas vesicle protein O (Haloferax mediterranei (strain ATCC 33500 / DSM 1411 / JCM 8866 / NBRC 14739 / NCIMB 2177 / R-4) (Halobacterium mediterranei)).